A 143-amino-acid polypeptide reads, in one-letter code: Large ribosomal subunit protein uL15 (143 aa).

Residues 1–59 (MELNGIKPSLGAKHAKRRVGRGIGSGLGKTAGRGHKGQKSRAGGYHKVGFEGGQMPMQR) form a disordered region. The span at 21-31 (RGIGSGLGKTA) shows a compositional bias: gly residues.

This sequence belongs to the universal ribosomal protein uL15 family. Part of the 50S ribosomal subunit.

In terms of biological role, binds to the 23S rRNA. The polypeptide is Large ribosomal subunit protein uL15 (Polaromonas sp. (strain JS666 / ATCC BAA-500)).